Reading from the N-terminus, the 367-residue chain is MAVANPTTEQAILSEMRKQNRDRRALRFWLGFVLLALFCLVLVGGATRLTNSGLSITEWKPIHGVIPPLSAAEWEEEFRLYQRIPEFQQLNSSMTVDEFKGIFWWEWAHRLIARAIGVIFALPLIYFWLTGRIEKRLRWPLVGILALGGLQGGIGWWMVSSGLSVRTDVSQYRLATHLVMACLIFAGCMWIMRGLSRHSDDPPPTRSSRGFAAAIAIFSLFQIYLGALVAGLDAGFSYNTWPLMDGAVIPSDLLIQQPFWINAFENPKTVQFIHRIGAYTLFALTLINMVIALRAAPWTTHARRAILLFVLVTLQAAIGIATLLMQVPLHWGLLHQAGALVVFGFAVANWRGFYGEYPHGTMIAERD.

A run of 5 helical transmembrane segments spans residues 25 to 45 (ALRF…LVGG), 111 to 131 (LIAR…WLTG), 139 to 159 (WPLV…WWMV), 174 to 194 (LATH…IMRG), and 210 to 230 (GFAA…ALVA). H274 provides a ligand contact to heme. The next 3 membrane-spanning stretches (helical) occupy residues 276–296 (IGAY…LRAA), 305–325 (AILL…TLLM), and 327–347 (VPLH…GFAV). H335 contributes to the heme binding site.

This sequence belongs to the COX15/CtaA family. Type 2 subfamily. In terms of assembly, interacts with CtaB. It depends on heme b as a cofactor.

Its subcellular location is the cell membrane. The enzyme catalyses Fe(II)-heme o + 2 A + H2O = Fe(II)-heme a + 2 AH2. It participates in porphyrin-containing compound metabolism; heme A biosynthesis; heme A from heme O: step 1/1. Its function is as follows. Catalyzes the conversion of heme O to heme A by two successive hydroxylations of the methyl group at C8. The first hydroxylation forms heme I, the second hydroxylation results in an unstable dihydroxymethyl group, which spontaneously dehydrates, resulting in the formyl group of heme A. This chain is Heme A synthase, found in Rhizobium johnstonii (strain DSM 114642 / LMG 32736 / 3841) (Rhizobium leguminosarum bv. viciae).